A 210-amino-acid polypeptide reads, in one-letter code: Thiamine-phosphate synthase (210 aa).

4-amino-2-methyl-5-(diphosphooxymethyl)pyrimidine-binding positions include 38–42 (QFREK) and Asn-70. Residues Asp-71 and Asp-90 each coordinate Mg(2+). Ser-107 contributes to the 4-amino-2-methyl-5-(diphosphooxymethyl)pyrimidine binding site. 132–134 (TKT) provides a ligand contact to 2-[(2R,5Z)-2-carboxy-4-methylthiazol-5(2H)-ylidene]ethyl phosphate. Position 135 (Lys-135) interacts with 4-amino-2-methyl-5-(diphosphooxymethyl)pyrimidine. 2-[(2R,5Z)-2-carboxy-4-methylthiazol-5(2H)-ylidene]ethyl phosphate is bound at residue 183-184 (IS).

The protein belongs to the thiamine-phosphate synthase family. Mg(2+) is required as a cofactor.

The enzyme catalyses 2-[(2R,5Z)-2-carboxy-4-methylthiazol-5(2H)-ylidene]ethyl phosphate + 4-amino-2-methyl-5-(diphosphooxymethyl)pyrimidine + 2 H(+) = thiamine phosphate + CO2 + diphosphate. The catalysed reaction is 2-(2-carboxy-4-methylthiazol-5-yl)ethyl phosphate + 4-amino-2-methyl-5-(diphosphooxymethyl)pyrimidine + 2 H(+) = thiamine phosphate + CO2 + diphosphate. It carries out the reaction 4-methyl-5-(2-phosphooxyethyl)-thiazole + 4-amino-2-methyl-5-(diphosphooxymethyl)pyrimidine + H(+) = thiamine phosphate + diphosphate. The protein operates within cofactor biosynthesis; thiamine diphosphate biosynthesis; thiamine phosphate from 4-amino-2-methyl-5-diphosphomethylpyrimidine and 4-methyl-5-(2-phosphoethyl)-thiazole: step 1/1. Its function is as follows. Condenses 4-methyl-5-(beta-hydroxyethyl)thiazole monophosphate (THZ-P) and 2-methyl-4-amino-5-hydroxymethyl pyrimidine pyrophosphate (HMP-PP) to form thiamine monophosphate (TMP). This is Thiamine-phosphate synthase from Archaeoglobus fulgidus (strain ATCC 49558 / DSM 4304 / JCM 9628 / NBRC 100126 / VC-16).